We begin with the raw amino-acid sequence, 1169 residues long: Chromosome partition protein Smc (1169 aa).

Residue 32–39 (PNGCGKSN) participates in ATP binding. Coiled-coil stretches lie at residues 170–265 (ISKY…TGEE) and 307–481 (IRHT…ERLN). One can recognise an SMC hinge domain in the interval 525-620 (DRLGEKIEVA…CASDPAEAAE (96 aa)). 2 coiled-coil regions span residues 656–914 (ALAR…MKLA) and 985–1014 (RYLE…ECRA).

It belongs to the SMC family. In terms of assembly, homodimer.

The protein localises to the cytoplasm. Its function is as follows. Required for chromosome condensation and partitioning. In Methylococcus capsulatus (strain ATCC 33009 / NCIMB 11132 / Bath), this protein is Chromosome partition protein Smc.